The chain runs to 423 residues: uncharacterized protein (423 aa).

Mg(2+) is bound by residues Lys181, Asp183, and Glu184. Position 181 is an N6-carboxylysine (Lys181).

The protein belongs to the RuBisCO large chain family. Type IV subfamily. It depends on Mg(2+) as a cofactor.

Its function is as follows. May be involved in sulfur metabolism and oxidative stress response. Does not show RuBisCO activity. This is an uncharacterized protein from Bordetella bronchiseptica (strain ATCC BAA-588 / NCTC 13252 / RB50) (Alcaligenes bronchisepticus).